Reading from the N-terminus, the 418-residue chain is Gamma-glutamyl phosphate reductase (418 aa).

The span at 1–18 shows a compositional bias: basic and acidic residues; that stretch reads MAIQDEMRQVAEGAREAS. Positions 1–22 are disordered; it reads MAIQDEMRQVAEGAREASRTLS.

It belongs to the gamma-glutamyl phosphate reductase family.

Its subcellular location is the cytoplasm. It carries out the reaction L-glutamate 5-semialdehyde + phosphate + NADP(+) = L-glutamyl 5-phosphate + NADPH + H(+). Its pathway is amino-acid biosynthesis; L-proline biosynthesis; L-glutamate 5-semialdehyde from L-glutamate: step 2/2. In terms of biological role, catalyzes the NADPH-dependent reduction of L-glutamate 5-phosphate into L-glutamate 5-semialdehyde and phosphate. The product spontaneously undergoes cyclization to form 1-pyrroline-5-carboxylate. This is Gamma-glutamyl phosphate reductase from Syntrophus aciditrophicus (strain SB).